A 437-amino-acid polypeptide reads, in one-letter code: 5-hydroxytryptamine receptor 3B (437 aa).

The signal sequence occupies residues 1–21 (MILLWSCLLVAVVGILGTATP). The Extracellular portion of the chain corresponds to 22–238 (QPGNSSLHRL…VVIRRCPLAY (217 aa)). 3 N-linked (GlcNAc...) asparagine glycosylation sites follow: N25, N92, and N134. Residues C151 and C165 are joined by a disulfide bond. The helical transmembrane segment at 239 to 259 (VVSLLIPSIFLMLVDLGSFYL) threads the bilayer. Over 260 to 264 (PPNCR) the chain is Cytoplasmic. The helical transmembrane segment at 265 to 282 (ARIVFKTNVLVGYTVFRV) threads the bilayer. N283 carries N-linked (GlcNAc...) asparagine glycosylation. At 283 to 292 (NMSDEVPRSA) the chain is on the extracellular side. Residues 293–313 (GCTPLIGVFFTVCMALLVLSL) form a helical membrane-spanning segment. At 314–410 (SKSILLIKFL…WLAILYRFDQ (97 aa)) the chain is on the cytoplasmic side. The tract at residues 377–409 (FWFQFRSINNSLRTRDQIHQKEVEWLAILYRFD) is HA-stretch; determines single-channel conductance in 5-HT3 receptors. A helical transmembrane segment spans residues 411–431 (LLFRIYLAVLGLYTVTLCSLW). The Extracellular portion of the chain corresponds to 432 to 437 (ALWSRM).

It belongs to the ligand-gated ion channel (TC 1.A.9) family. 5-hydroxytryptamine receptor (TC 1.A.9.2) subfamily. HTR3B sub-subfamily. In terms of assembly, forms homopentameric as well as heteropentameric serotonin-activated cation-selective channel complexes with HTR3A. The homomeric complex is not functional. Heteropentameric complexes display properties which resemble that of neuronal serotonin-activated channels in vivo. N-glycosylation is required for membrane localization.

It is found in the postsynaptic cell membrane. The protein localises to the cell membrane. It carries out the reaction Na(+)(in) = Na(+)(out). It catalyses the reaction K(+)(in) = K(+)(out). The enzyme catalyses Ca(2+)(in) = Ca(2+)(out). Functionally, forms serotonin (5-hydroxytryptamine/5-HT3)-activated cation-selective channel complexes, which when activated cause fast, depolarizing responses in neurons. In Mus musculus (Mouse), this protein is 5-hydroxytryptamine receptor 3B.